A 76-amino-acid polypeptide reads, in one-letter code: U1-cyrtautoxin-As1d (76 aa).

Cystine bridges form between Cys23/Cys37, Cys30/Cys51, Cys36/Cys66, and Cys69/Cys76.

Belongs to the neurotoxin 21 family. Expressed by the venom gland.

It is found in the secreted. Functionally, neurotoxin with probable ion channel impairing activity. In vivo, is both paralytic and lethal, when injected into lepidopteran larvae. In Apomastus schlingeri (Trap-door spider), this protein is U1-cyrtautoxin-As1d.